The primary structure comprises 293 residues: Acetyl-coenzyme A carboxylase carboxyl transferase subunit beta (293 aa).

Residues 29–293 form the CoA carboxyltransferase N-terminal domain; the sequence is LWVKCSECSQ…GVKELAEANT (265 aa). 4 residues coordinate Zn(2+): Cys-33, Cys-36, Cys-52, and Cys-55. The C4-type zinc finger occupies 33–55; sequence CSECSQVAYRKDLISNFNVCSNC.

It belongs to the AccD/PCCB family. Acetyl-CoA carboxylase is a heterohexamer composed of biotin carboxyl carrier protein (AccB), biotin carboxylase (AccC) and two subunits each of ACCase subunit alpha (AccA) and ACCase subunit beta (AccD). The cofactor is Zn(2+).

It is found in the cytoplasm. It catalyses the reaction N(6)-carboxybiotinyl-L-lysyl-[protein] + acetyl-CoA = N(6)-biotinyl-L-lysyl-[protein] + malonyl-CoA. Its pathway is lipid metabolism; malonyl-CoA biosynthesis; malonyl-CoA from acetyl-CoA: step 1/1. Functionally, component of the acetyl coenzyme A carboxylase (ACC) complex. Biotin carboxylase (BC) catalyzes the carboxylation of biotin on its carrier protein (BCCP) and then the CO(2) group is transferred by the transcarboxylase to acetyl-CoA to form malonyl-CoA. The chain is Acetyl-coenzyme A carboxylase carboxyl transferase subunit beta from Prochlorococcus marinus (strain MIT 9301).